The following is a 270-amino-acid chain: Aliphatic sulfonates import ATP-binding protein SsuB 3 (270 aa).

An ABC transporter domain is found at 17–238 (LAVRNLKKAF…VRGSHRLAAL (222 aa)). 49–56 (GRSGCGKS) lines the ATP pocket.

The protein belongs to the ABC transporter superfamily. Aliphatic sulfonates importer (TC 3.A.1.17.2) family. In terms of assembly, the complex is composed of two ATP-binding proteins (SsuB), two transmembrane proteins (SsuC) and a solute-binding protein (SsuA).

It is found in the cell inner membrane. It catalyses the reaction ATP + H2O + aliphatic sulfonate-[sulfonate-binding protein]Side 1 = ADP + phosphate + aliphatic sulfonateSide 2 + [sulfonate-binding protein]Side 1.. Functionally, part of the ABC transporter complex SsuABC involved in aliphatic sulfonates import. Responsible for energy coupling to the transport system. This chain is Aliphatic sulfonates import ATP-binding protein SsuB 3, found in Pseudomonas savastanoi pv. phaseolicola (strain 1448A / Race 6) (Pseudomonas syringae pv. phaseolicola (strain 1448A / Race 6)).